A 363-amino-acid chain; its full sequence is MSAIYNFCAGPAMLPAAVMKKAQQELLDWNGLGVSVMEVSHRGKEFIALTKQAEADLRELMHIPQNYHVLFMHGGGRGQFSAVVNNFLGNQGRALYLVSGQWSSAALAEAQKLAGDTQIDSLNIVEKHNGLNAVVLPDLHKIDADYRYVHYCPNETVDGIEIFDELDSPWPIVADLSSTIMSREIDVSRYGLIYAGAQKNIGPSGLSIVIVRDDMLKLPSLTQSSIMDYRLAVEHDSMFNTPPTFAWYLAAEVFAWLKSLGGVASIAKINQQKAQMLYACIDANPFYKNGVVAANRSQMNVTFQLADESLDGAFLKEAEAAGLVALKGHRIVGGMRASLYNAMPLEGVAALVSFMNEFAAKHS.

Arg42 contributes to the L-glutamate binding site. Residues 76-77, Trp102, Thr156, Asp175, and Gln198 contribute to the pyridoxal 5'-phosphate site; that span reads GR. Position 199 is an N6-(pyridoxal phosphate)lysine (Lys199). 240-241 provides a ligand contact to pyridoxal 5'-phosphate; sequence NT.

Belongs to the class-V pyridoxal-phosphate-dependent aminotransferase family. SerC subfamily. Homodimer. Requires pyridoxal 5'-phosphate as cofactor.

It localises to the cytoplasm. It carries out the reaction O-phospho-L-serine + 2-oxoglutarate = 3-phosphooxypyruvate + L-glutamate. The catalysed reaction is 4-(phosphooxy)-L-threonine + 2-oxoglutarate = (R)-3-hydroxy-2-oxo-4-phosphooxybutanoate + L-glutamate. Its pathway is amino-acid biosynthesis; L-serine biosynthesis; L-serine from 3-phospho-D-glycerate: step 2/3. It participates in cofactor biosynthesis; pyridoxine 5'-phosphate biosynthesis; pyridoxine 5'-phosphate from D-erythrose 4-phosphate: step 3/5. In terms of biological role, catalyzes the reversible conversion of 3-phosphohydroxypyruvate to phosphoserine and of 3-hydroxy-2-oxo-4-phosphonooxybutanoate to phosphohydroxythreonine. The protein is Phosphoserine aminotransferase of Shewanella sp. (strain MR-4).